Reading from the N-terminus, the 321-residue chain is Cytochrome c biogenesis protein CcsA (321 aa).

The next 8 membrane-spanning stretches (helical) occupy residues 1-21, 36-56, 70-90, 97-117, 143-163, 229-249, 256-276, and 290-310; these read MIFITLEHILAHISFSLISVV, LSSSGGKGMIVTFVCTTGLLI, LYESFMFLSWSSSVIHIILEV, GLGAITAPSTMLTHGFATSGL, ILLSYATLLCGSLSSIAFLII, VIGLGFLLLTIGILSGAVWAN, WSWDPKETWALITWIIFAIYL, and AIIASLGSFIVWICYLGVDLL.

It belongs to the CcmF/CycK/Ccl1/NrfE/CcsA family. In terms of assembly, may interact with Ccs1.

The protein resides in the plastid. The protein localises to the chloroplast thylakoid membrane. Its function is as follows. Required during biogenesis of c-type cytochromes (cytochrome c6 and cytochrome f) at the step of heme attachment. This chain is Cytochrome c biogenesis protein CcsA, found in Cycas taitungensis (Prince sago).